The chain runs to 823 residues: Putative ankyrin repeat domain-containing protein 20A3 (823 aa).

5 ANK repeats span residues 66 to 95, 99 to 128, 132 to 161, 165 to 194, and 198 to 227; these read QHRTALHLACASGHVQVVTLLVNRKCQIDV, ENRTPLIQAVHCQEEACAVILLEHGANPNL, YGNTALHYAVYSESTSLAEKLLSHGAHIEA, DNNTPLLFAIICKKEKMVEFLLKRKASSHA, and LRRSALMLAVYYDSPGIVNILLKQNIDVFA. 2 disordered regions span residues 301-343 and 355-402; these read VPEK…EVED and VQTL…LSEN. Positions 372–384 are enriched in basic and acidic residues; it reads QERHERSEKKQPQ. Coiled coils occupy residues 431 to 480, 571 to 724, and 776 to 805; these read KKLK…KQLE, AFRY…NNST, and LVLEEKSKKLMNECDHLKESLFQYEREKTE.

This is Putative ankyrin repeat domain-containing protein 20A3 from Homo sapiens (Human).